The following is a 165-amino-acid chain: Chorismate pyruvate-lyase (165 aa).

The substrate site is built by Met-35, Arg-77, Leu-115, and Glu-156.

The protein belongs to the UbiC family. In terms of assembly, monomer.

The protein localises to the cytoplasm. The enzyme catalyses chorismate = 4-hydroxybenzoate + pyruvate. The protein operates within cofactor biosynthesis; ubiquinone biosynthesis. Functionally, removes the pyruvyl group from chorismate, with concomitant aromatization of the ring, to provide 4-hydroxybenzoate (4HB) for the ubiquinone pathway. In Escherichia coli O157:H7, this protein is Chorismate pyruvate-lyase.